The primary structure comprises 388 residues: Homeobox protein XHOX-3 (388 aa).

Disordered regions lie at residues 30–109 and 131–163; these read AVGS…SDFY and SAGQCSEPMGGSPVNGSDSSKGGGGSHGSFSAC. Polar residues-rich tracts occupy residues 68–81 and 91–103; these read ATGQQRSRSPQLRI and DSLSTKGQHSSSD. Positions 168-227 form a DNA-binding region, homeobox; sequence MRRYRTAFTREQIARLEKEFYRENYVSRPRRCELAAALNLPETTIKVWFQNRRMKDKRQR.

This sequence belongs to the even-skipped homeobox family.

The protein localises to the nucleus. Functionally, may be required for posterior development and development of normal embryonic axial pattern. The sequence is that of Homeobox protein XHOX-3 (xhox3) from Xenopus laevis (African clawed frog).